The following is a 422-amino-acid chain: 3-phosphoshikimate 1-carboxyvinyltransferase (422 aa).

Positions 20, 21, and 25 each coordinate 3-phosphoshikimate. Position 20 (lysine 20) interacts with phosphoenolpyruvate. Phosphoenolpyruvate is bound by residues glycine 92 and arginine 120. 3-phosphoshikimate-binding residues include serine 163, serine 164, glutamine 165, serine 191, aspartate 304, and lysine 331. Glutamine 165 provides a ligand contact to phosphoenolpyruvate. The Proton acceptor role is filled by aspartate 304. Positions 335 and 377 each coordinate phosphoenolpyruvate.

The protein belongs to the EPSP synthase family. In terms of assembly, monomer.

Its subcellular location is the cytoplasm. It carries out the reaction 3-phosphoshikimate + phosphoenolpyruvate = 5-O-(1-carboxyvinyl)-3-phosphoshikimate + phosphate. The protein operates within metabolic intermediate biosynthesis; chorismate biosynthesis. Its function is as follows. Catalyzes the transfer of the enolpyruvyl moiety of phosphoenolpyruvate (PEP) to the 5-hydroxyl of shikimate-3-phosphate (S3P) to produce enolpyruvyl shikimate-3-phosphate and inorganic phosphate. The protein is 3-phosphoshikimate 1-carboxyvinyltransferase of Methanocorpusculum labreanum (strain ATCC 43576 / DSM 4855 / Z).